A 289-amino-acid chain; its full sequence is Shikimate dehydrogenase (NADP(+)) (289 aa).

Shikimate is bound by residues 22–24 (SRS) and threonine 69. Lysine 73 acts as the Proton acceptor in catalysis. Glutamate 85 is an NADP(+) binding site. Positions 94 and 109 each coordinate shikimate. Residues 134–138 (GAGGA), 158–163 (NRTLSR), and isoleucine 226 contribute to the NADP(+) site. A shikimate-binding site is contributed by tyrosine 228. Position 249 (glycine 249) interacts with NADP(+).

The protein belongs to the shikimate dehydrogenase family. Homodimer.

The catalysed reaction is shikimate + NADP(+) = 3-dehydroshikimate + NADPH + H(+). It functions in the pathway metabolic intermediate biosynthesis; chorismate biosynthesis; chorismate from D-erythrose 4-phosphate and phosphoenolpyruvate: step 4/7. Functionally, involved in the biosynthesis of the chorismate, which leads to the biosynthesis of aromatic amino acids. Catalyzes the reversible NADPH linked reduction of 3-dehydroshikimate (DHSA) to yield shikimate (SA). The protein is Shikimate dehydrogenase (NADP(+)) of Brucella abortus (strain S19).